Here is a 300-residue protein sequence, read N- to C-terminus: Zinc finger protein RME1 (300 aa).

Residues Gln-80 to Glu-90 are compositionally biased toward polar residues. The disordered stretch occupies residues Gln-80–Glu-100. C2H2-type zinc fingers lie at residues Tyr-178 to Glu-199, Cys-206 to His-234, and Leu-256 to His-281.

The protein resides in the nucleus. Functionally, involved in the control of meiosis. Represses the transcription of the IME1 gene thereby inhibiting cells from entering meiosis. But also activates the CLN2 gene thus promoting mitosis. The protein is Zinc finger protein RME1 (RME1) of Saccharomyces cerevisiae (strain ATCC 204508 / S288c) (Baker's yeast).